We begin with the raw amino-acid sequence, 478 residues long: Glutamate--tRNA ligase (478 aa).

The 'HIGH' region motif lies at 9 to 19; sequence PSPTGLLHIGT. Positions 248–252 match the 'KMSKS' region motif; the sequence is KLSKR. Lys251 lines the ATP pocket.

This sequence belongs to the class-I aminoacyl-tRNA synthetase family. Glutamate--tRNA ligase type 1 subfamily. Monomer.

The protein localises to the cytoplasm. It catalyses the reaction tRNA(Glu) + L-glutamate + ATP = L-glutamyl-tRNA(Glu) + AMP + diphosphate. Functionally, catalyzes the attachment of glutamate to tRNA(Glu) in a two-step reaction: glutamate is first activated by ATP to form Glu-AMP and then transferred to the acceptor end of tRNA(Glu). This is Glutamate--tRNA ligase from Prochlorococcus marinus (strain MIT 9515).